The following is a 158-amino-acid chain: Small ribosomal subunit protein bS16 (158 aa).

Low complexity predominate over residues 111-121; the sequence is AAAGLAEAPTK. Residues 111–158 are disordered; it reads AAAGLAEAPTKPAKKAPKAEAAPKTEAAPKADAPKTEEQAGAGSGEQG. Residues 127 to 148 are compositionally biased toward basic and acidic residues; that stretch reads PKAEAAPKTEAAPKADAPKTEE.

It belongs to the bacterial ribosomal protein bS16 family.

The polypeptide is Small ribosomal subunit protein bS16 (Salinispora arenicola (strain CNS-205)).